The chain runs to 283 residues: Glutamyl-Q tRNA(Asp) synthetase (283 aa).

L-glutamate is bound by residues 5–9 (RFAPT) and E41. The 'HIGH' region motif lies at 8 to 18 (PTPSGPLHLGS). Residues C97, C99, Y111, and C115 each contribute to the Zn(2+) site. 2 residues coordinate L-glutamate: Y168 and R186. Positions 224–228 (KLSKQ) match the 'KMSKS' region motif. Position 227 (K227) interacts with ATP.

The protein belongs to the class-I aminoacyl-tRNA synthetase family. GluQ subfamily. Zn(2+) is required as a cofactor.

Catalyzes the tRNA-independent activation of glutamate in presence of ATP and the subsequent transfer of glutamate onto a tRNA(Asp). Glutamate is transferred on the 2-amino-5-(4,5-dihydroxy-2-cyclopenten-1-yl) moiety of the queuosine in the wobble position of the QUC anticodon. This chain is Glutamyl-Q tRNA(Asp) synthetase, found in Idiomarina loihiensis (strain ATCC BAA-735 / DSM 15497 / L2-TR).